The sequence spans 619 residues: Magnesium-chelatase 67 kDa subunit (619 aa).

33–40 (STVGSGKS) contributes to the ATP binding site. Residues 273–321 (TRMPEREPSEEEMQQEEPPPPEEQPEQEGEDENAPPDETDSDADEEQEE) form a disordered region. Acidic residues predominate over residues 280 to 321 (PSEEEMQQEEPPPPEEQPEQEGEDENAPPDETDSDADEEQEE). The region spanning 431-619 (LFIFMVDASG…AEQIVEAALS (189 aa)) is the VWFA domain.

This sequence belongs to the Mg-chelatase subunits D/I family.

It catalyses the reaction protoporphyrin IX + Mg(2+) + ATP + H2O = Mg-protoporphyrin IX + ADP + phosphate + 3 H(+). Its pathway is porphyrin-containing compound metabolism; bacteriochlorophyll biosynthesis. Involved in bacteriochlorophyll biosynthesis; introduces a magnesium ion into protoporphyrin IX to yield Mg-protoporphyrin IX. The polypeptide is Magnesium-chelatase 67 kDa subunit (bchD) (Chlorobaculum parvum (strain DSM 263 / NCIMB 8327) (Chlorobium vibrioforme subsp. thiosulfatophilum)).